The chain runs to 616 residues: Spastin (616 aa).

A disordered region spans residues 1-43 (MNSPGGRGKKKGSGGASNPVPPRPPPPCLAPAPPAAGPAPPPE). Positions 1–50 (MNSPGGRGKKKGSGGASNPVPPRPPPPCLAPAPPAAGPAPPPESPHKRNL) are required for nuclear localization. Residues 1–56 (MNSPGGRGKKKGSGGASNPVPPRPPPPCLAPAPPAAGPAPPPESPHKRNLYYFSYP) lie on the Cytoplasmic side of the membrane. The tract at residues 1 to 80 (MNSPGGRGKK…LGLLFVWLCQ (80 aa)) is required for interaction with ATL1. Positions 1–194 (MNSPGGRGKK…LVMAKDRLQL (194 aa)) are required for midbody localization. Residues 1 to 300 (MNSPGGRGKK…GTPKTNRTNK (300 aa)) are required for interaction with RTN1. Positions 4–11 (PGGRGKKK) match the Nuclear localization signal motif. The span at 19–43 (PVPPRPPPPCLAPAPPAAGPAPPPE) shows a compositional bias: pro residues. The tract at residues 50 to 87 (LYYFSYPLFVGFALLRLVAFHLGLLFVWLCQRFSRALM) is required for interaction with SSNA1 and microtubules. An intramembrane region (helical) is located at residues 57-77 (LFVGFALLRLVAFHLGLLFVW). The Nuclear export signal motif lies at 59 to 67 (VGFALLRLV). Residues 78–616 (LCQRFSRALM…WNKDFGDTTV (539 aa)) lie on the Cytoplasmic side of the membrane. A sufficient for interaction with CHMP1B region spans residues 112–196 (EAERVRVFHK…MAKDRLQLLE (85 aa)). The required for interaction with microtubules stretch occupies residues 114-200 (ERVRVFHKQA…RLQLLEKMQP (87 aa)). The 76-residue stretch at 120-195 (HKQAFEYISI…VMAKDRLQLL (76 aa)) folds into the MIT domain. The disordered stretch occupies residues 224–266 (HLQSESGAVPKRKDPLTHTSNSLPRSKTVMKTGSAGLSGHHRA). The segment at 228-616 (ESGAVPKRKD…WNKDFGDTTV (389 aa)) is sufficient for microtubule severing. The span at 240–254 (THTSNSLPRSKTVMK) shows a compositional bias: polar residues. Serine 245 and serine 268 each carry phosphoserine. Residues 270 to 328 (SGLSMVSGVKQGSGPAPTTHKGTPKTNRTNKPSTPTTATRKKKDLKNFRNVDSNLANLI) are required for interaction with microtubules and microtubule severing. Residues 278-312 (VKQGSGPAPTTHKGTPKTNRTNKPSTPTTATRKKK) form a disordered region. Residues 289-307 (HKGTPKTNRTNKPSTPTTA) are compositionally biased toward polar residues. Position 306 is a phosphothreonine (threonine 306). The short motif at 309 to 312 (RKKK) is the Nuclear localization signal element. Positions 310-312 (KKK) are required for interaction with microtubules. 382–389 (GPPGNGKT) provides a ligand contact to ATP. Serine 597 bears the Phosphoserine mark.

The protein belongs to the AAA ATPase family. Spastin subfamily. Homohexamer. Mostly monomeric, but assembles into hexameric structure for short periods of time. Oligomerization seems to be a prerequisite for catalytic activity. Binding to ATP in a cleft between two adjacent subunits stabilizes the homohexameric form. Binds to microtubules at least in part via the alpha-tubulin and beta-tubulin tails. The hexamer adopts a ring conformation through which microtubules pass prior to being severed. Does not interact strongly with tubulin heterodimers. Interacts (via MIT domain) with CHMP1B; the interaction is direct. Interacts with SSNA1. Interacts with ATL1. Interacts with RTN1. Interacts with ZFYVE27. Isoform 1 but not isoform 3 interacts with RTN2. Interacts with REEP1. Interacts (via MIT domain) with IST1. As to expression, expressed in brain, heart, kidney, liver, lung, pancreas, placenta and skeletal muscle. The short isoforms may predominate in brain and spinal cord.

Its subcellular location is the membrane. The protein resides in the endoplasmic reticulum. It localises to the midbody. It is found in the cytoplasm. The protein localises to the cytoskeleton. Its subcellular location is the microtubule organizing center. The protein resides in the centrosome. It localises to the perinuclear region. It is found in the nucleus. The protein localises to the spindle. Its subcellular location is the cell projection. The protein resides in the axon. It localises to the endoplasmic reticulum membrane. It is found in the nucleus membrane. The protein localises to the lipid droplet. Its subcellular location is the endosome. The catalysed reaction is n ATP + n H2O + a microtubule = n ADP + n phosphate + (n+1) alpha/beta tubulin heterodimers.. Its activity is regulated as follows. Allosteric enzyme with a cooperative mechanism; at least two neighbor subunits influence each other strongly in spastin hexamers. Microtubule binding promotes cooperative interactions among spastin subunits. ATP-bound enzyme interacts strongly and cooperatively with microtubules; this interaction stimulates ATP hydrolysis. Its function is as follows. ATP-dependent microtubule severing protein that specifically recognizes and cuts microtubules that are polyglutamylated. Preferentially recognizes and acts on microtubules decorated with short polyglutamate tails: severing activity increases as the number of glutamates per tubulin rises from one to eight, but decreases beyond this glutamylation threshold. Severing activity is not dependent on tubulin acetylation or detyrosination. Microtubule severing promotes reorganization of cellular microtubule arrays and the release of microtubules from the centrosome following nucleation. It is critical for the biogenesis and maintenance of complex microtubule arrays in axons, spindles and cilia. SPAST is involved in abscission step of cytokinesis and nuclear envelope reassembly during anaphase in cooperation with the ESCRT-III complex. Recruited at the midbody, probably by IST1, and participates in membrane fission during abscission together with the ESCRT-III complex. Recruited to the nuclear membrane by IST1 and mediates microtubule severing, promoting nuclear envelope sealing and mitotic spindle disassembly during late anaphase. Required for membrane traffic from the endoplasmic reticulum (ER) to the Golgi and endosome recycling. Recruited by IST1 to endosomes and regulates early endosomal tubulation and recycling by mediating microtubule severing. Probably plays a role in axon growth and the formation of axonal branches. In terms of biological role, involved in lipid metabolism by regulating the size and distribution of lipid droplets. This is Spastin from Homo sapiens (Human).